The sequence spans 1065 residues: Outer capsid protein VP3 (1065 aa).

The protein localises to the virion. It catalyses the reaction a 5'-end diphospho-ribonucleoside in mRNA + GTP + H(+) = a 5'-end (5'-triphosphoguanosine)-ribonucleoside in mRNA + diphosphate. The catalysed reaction is a 5'-end (5'-triphosphoguanosine)-ribonucleoside in mRNA + S-adenosyl-L-methionine = a 5'-end (N(7)-methyl 5'-triphosphoguanosine)-ribonucleoside in mRNA + S-adenosyl-L-homocysteine. In terms of biological role, outer capsid protein involved in mRNA capping. Catalyzes the last 3 enzymatic activities for formation of the 5' cap structure on the viral plus-strand transcripts, namely the RNA guanylyltransferase, RNA-7N- and RNA-2'O-methyltransferase activities. The sequence is that of Outer capsid protein VP3 (S3) from Cryphonectria parasitica mycoreovirus 1 (strain 9B21) (CpMYRV-1).